A 550-amino-acid chain; its full sequence is Cyclopentanone 1,2-monooxygenase (550 aa).

Residues 31–32 (FT), aspartate 51, tryptophan 60, aspartate 71, tyrosine 77, and valine 123 each bind FAD.

It belongs to the FAD-binding monooxygenase family. In terms of assembly, homotetramer. The cofactor is FAD.

It catalyses the reaction cyclopentanone + NADPH + O2 + H(+) = 5-valerolactone + NADP(+) + H2O. It functions in the pathway alcohol metabolism; cyclopentanol degradation; 5-valerolactone from cyclopentanol: step 2/2. Functionally, catalyzes a Baeyer-Villiger oxidation reaction, i.e. the insertion of an oxygen atom into a carbon-carbon bond adjacent to a carbonyl, which converts ketones to esters or lactones using NADPH as an electron donor. Converts cyclopentanone to 5-valerolactone, a step in the degradation pathway of cyclopentanol. Besides cycloalkanones, can also act on methylated and other alkylated cycloalkanones, and on methylated cycloalkenones, with high enantioselectivity in some cases. Cannot use NADH instead of NADPH. The sequence is that of Cyclopentanone 1,2-monooxygenase (cpnB) from Comamonas sp. (strain NCIMB 9872).